Here is a 227-residue protein sequence, read N- to C-terminus: Isopentenyl-diphosphate delta-isomerase 2 (227 aa).

K36 is a binding site for substrate. Positions 40 and 51 each coordinate Mg(2+). Residues 49–199 (LLHRAFSVVL…EVKVTPWLRT (151 aa)) enclose the Nudix hydrolase domain. R70 and K74 together coordinate substrate. S86 is an active-site residue. S87 serves as a coordination point for substrate. Mg(2+)-binding residues include E146 and E148. Residue E148 is part of the active site. Positions 225 to 227 (HRV) match the Microbody targeting signal motif.

The protein belongs to the IPP isomerase type 1 family. Mg(2+) is required as a cofactor. In terms of tissue distribution, muscle-specific expression.

Its subcellular location is the peroxisome. The catalysed reaction is isopentenyl diphosphate = dimethylallyl diphosphate. It participates in isoprenoid biosynthesis; dimethylallyl diphosphate biosynthesis; dimethylallyl diphosphate from isopentenyl diphosphate: step 1/1. Catalyzes the 1,3-allylic rearrangement of the homoallylic substrate isopentenyl (IPP) to its highly electrophilic allylic isomer, dimethylallyl diphosphate (DMAPP). The sequence is that of Isopentenyl-diphosphate delta-isomerase 2 (IDI2) from Homo sapiens (Human).